The chain runs to 448 residues: Exodeoxyribonuclease 7 large subunit (448 aa).

The protein belongs to the XseA family. As to quaternary structure, heterooligomer composed of large and small subunits.

It localises to the cytoplasm. The catalysed reaction is Exonucleolytic cleavage in either 5'- to 3'- or 3'- to 5'-direction to yield nucleoside 5'-phosphates.. Its function is as follows. Bidirectionally degrades single-stranded DNA into large acid-insoluble oligonucleotides, which are then degraded further into small acid-soluble oligonucleotides. The polypeptide is Exodeoxyribonuclease 7 large subunit (Nitrosomonas europaea (strain ATCC 19718 / CIP 103999 / KCTC 2705 / NBRC 14298)).